Reading from the N-terminus, the 322-residue chain is Acetyl-coenzyme A carboxylase carboxyl transferase subunit alpha (322 aa).

The CoA carboxyltransferase C-terminal domain maps to 39 to 293 (RLASKSQQLT…KRALAESLRQ (255 aa)).

Belongs to the AccA family. As to quaternary structure, acetyl-CoA carboxylase is a heterohexamer composed of biotin carboxyl carrier protein (AccB), biotin carboxylase (AccC) and two subunits each of ACCase subunit alpha (AccA) and ACCase subunit beta (AccD).

Its subcellular location is the cytoplasm. The enzyme catalyses N(6)-carboxybiotinyl-L-lysyl-[protein] + acetyl-CoA = N(6)-biotinyl-L-lysyl-[protein] + malonyl-CoA. It functions in the pathway lipid metabolism; malonyl-CoA biosynthesis; malonyl-CoA from acetyl-CoA: step 1/1. Its function is as follows. Component of the acetyl coenzyme A carboxylase (ACC) complex. First, biotin carboxylase catalyzes the carboxylation of biotin on its carrier protein (BCCP) and then the CO(2) group is transferred by the carboxyltransferase to acetyl-CoA to form malonyl-CoA. This Ralstonia pickettii (strain 12J) protein is Acetyl-coenzyme A carboxylase carboxyl transferase subunit alpha.